A 271-amino-acid chain; its full sequence is Probable redox regulatory protein SCO3349 (271 aa).

Disordered regions lie at residues 1-21 and 109-130; these read MPKT…KHIA and AEGT…TRPF. Over residues 7–21 the composition is skewed to basic and acidic residues; that stretch reads AKDEKSAKKDKKHIA.

It belongs to the Rv0495c family.

Its function is as follows. Essential for maintaining intracellular redox homeostasis. The sequence is that of Probable redox regulatory protein SCO3349 from Streptomyces coelicolor (strain ATCC BAA-471 / A3(2) / M145).